The sequence spans 197 residues: FMN-dependent NADH:quinone oxidoreductase (197 aa).

Residues Ser-10 and 17 to 19 each bind FMN; that span reads SFS.

Belongs to the azoreductase type 1 family. Homodimer. Requires FMN as cofactor.

The catalysed reaction is 2 a quinone + NADH + H(+) = 2 a 1,4-benzosemiquinone + NAD(+). The enzyme catalyses N,N-dimethyl-1,4-phenylenediamine + anthranilate + 2 NAD(+) = 2-(4-dimethylaminophenyl)diazenylbenzoate + 2 NADH + 2 H(+). Quinone reductase that provides resistance to thiol-specific stress caused by electrophilic quinones. Its function is as follows. Also exhibits azoreductase activity. Catalyzes the reductive cleavage of the azo bond in aromatic azo compounds to the corresponding amines. In Mycoplasmoides gallisepticum (strain R(low / passage 15 / clone 2)) (Mycoplasma gallisepticum), this protein is FMN-dependent NADH:quinone oxidoreductase.